We begin with the raw amino-acid sequence, 332 residues long: tRNA U34 carboxymethyltransferase (332 aa).

Carboxy-S-adenosyl-L-methionine contacts are provided by residues lysine 91, tryptophan 105, lysine 110, glycine 130, 152 to 154, 181 to 182, methionine 196, tyrosine 200, and arginine 315; these read DPS and IE.

The protein belongs to the class I-like SAM-binding methyltransferase superfamily. CmoB family. As to quaternary structure, homotetramer.

It catalyses the reaction carboxy-S-adenosyl-L-methionine + 5-hydroxyuridine(34) in tRNA = 5-carboxymethoxyuridine(34) in tRNA + S-adenosyl-L-homocysteine + H(+). Functionally, catalyzes carboxymethyl transfer from carboxy-S-adenosyl-L-methionine (Cx-SAM) to 5-hydroxyuridine (ho5U) to form 5-carboxymethoxyuridine (cmo5U) at position 34 in tRNAs. The sequence is that of tRNA U34 carboxymethyltransferase from Shewanella putrefaciens (strain CN-32 / ATCC BAA-453).